A 193-amino-acid chain; its full sequence is dCTP deaminase, dUMP-forming (193 aa).

Residues 101–106 (KSSLGR), D119, 127–129 (TLE), Q148, Y162, and Q174 each bind dCTP. E129 acts as the Proton donor/acceptor in catalysis. Positions 162–184 (YGSKGTGSHYQGQRGPTPSRSYE) are disordered. Residues 167-183 (TGSHYQGQRGPTPSRSY) are compositionally biased toward polar residues.

Belongs to the dCTP deaminase family. Homotrimer.

It catalyses the reaction dCTP + 2 H2O = dUMP + NH4(+) + diphosphate. It participates in pyrimidine metabolism; dUMP biosynthesis; dUMP from dCTP: step 1/1. Bifunctional enzyme that catalyzes both the deamination of dCTP to dUTP and the hydrolysis of dUTP to dUMP without releasing the toxic dUTP intermediate. The chain is dCTP deaminase, dUMP-forming from Bifidobacterium longum (strain DJO10A).